We begin with the raw amino-acid sequence, 82 residues long: Turripeptide Gsg9.1 (82 aa).

A signal peptide spans 1 to 23; that stretch reads MMAKLMITVMTVFFLSLQQGADG. The propeptide occupies 24–46; sequence LFERWRKNQMAASRIMGNLITAR. 2 positions are modified to 4-hydroxyproline: P49 and P50. Intrachain disulfides connect C53–C68, C58–C72, and C64–C79. Residues E60 and E63 each carry the 4-carboxyglutamate modification.

It belongs to the Pg turripeptide superfamily. Expressed by the venom duct.

It localises to the secreted. In Gemmula sogodensis (Gem-turris), this protein is Turripeptide Gsg9.1.